Here is an 872-residue protein sequence, read N- to C-terminus: Telomerase component p95 (872 aa).

Disordered stretches follow at residues 55 to 75 and 471 to 492; these read NQDQ…NSNK and KNNK…ESTS. Residues 474 to 486 show a composition bias toward basic and acidic residues; it reads KNQEETPETKDET.

As to quaternary structure, telomerase consist of two subunit, p80 and p95 that form a 1:1:1 complex with the 159 nt telomerase RNA.

The protein resides in the nucleus. The protein localises to the chromosome. It is found in the telomere. It carries out the reaction DNA(n) + a 2'-deoxyribonucleoside 5'-triphosphate = DNA(n+1) + diphosphate. Functionally, ribonucleoprotein DNA polymerase that catalyzes the de novo synthesis of telomeric simple sequence repeats. Subunit p95 contains some or all of the template-independent primer DNA-binding site termed the anchor site. The protein is Telomerase component p95 of Tetrahymena thermophila.